Consider the following 470-residue polypeptide: Cysteine--tRNA ligase (470 aa).

Position 28 (cysteine 28) interacts with Zn(2+). The 'HIGH' region motif lies at 30–40 (PTVYNYIHIGN). Positions 212, 237, and 241 each coordinate Zn(2+). The 'KMSKS' region signature appears at 271–275 (KMSKS). Lysine 274 serves as a coordination point for ATP.

This sequence belongs to the class-I aminoacyl-tRNA synthetase family. In terms of assembly, monomer. Zn(2+) is required as a cofactor.

It localises to the cytoplasm. It catalyses the reaction tRNA(Cys) + L-cysteine + ATP = L-cysteinyl-tRNA(Cys) + AMP + diphosphate. The protein is Cysteine--tRNA ligase of Lactiplantibacillus plantarum (strain ATCC BAA-793 / NCIMB 8826 / WCFS1) (Lactobacillus plantarum).